A 100-amino-acid polypeptide reads, in one-letter code: Large ribosomal subunit protein uL23 (100 aa).

Belongs to the universal ribosomal protein uL23 family. As to quaternary structure, part of the 50S ribosomal subunit. Contacts protein L29, and trigger factor when it is bound to the ribosome.

Its function is as follows. One of the early assembly proteins it binds 23S rRNA. One of the proteins that surrounds the polypeptide exit tunnel on the outside of the ribosome. Forms the main docking site for trigger factor binding to the ribosome. The chain is Large ribosomal subunit protein uL23 from Synechococcus sp. (strain RCC307).